The chain runs to 41 residues: Large ribosomal subunit protein bL36A (41 aa).

Belongs to the bacterial ribosomal protein bL36 family.

This is Large ribosomal subunit protein bL36A from Aeromonas salmonicida (strain A449).